Here is a 246-residue protein sequence, read N- to C-terminus: Sulfate transporter CysZ (246 aa).

4 helical membrane passes run 24-44 (LFVL…IGFA), 69-89 (IVWP…FTMV), 148-168 (LLVL…WILF), and 214-234 (LLIP…ATLF).

Belongs to the CysZ family.

The protein resides in the cell inner membrane. Functionally, high affinity, high specificity proton-dependent sulfate transporter, which mediates sulfate uptake. Provides the sulfur source for the cysteine synthesis pathway. In Pseudomonas paraeruginosa (strain DSM 24068 / PA7) (Pseudomonas aeruginosa (strain PA7)), this protein is Sulfate transporter CysZ.